The primary structure comprises 283 residues: BTB/POZ domain-containing protein KCTD15 (283 aa).

Residues 1–32 form a disordered region; that stretch reads MPHRKERPSGSSLHTHGSTGTAEGGNMSRLSL. The span at 9 to 21 shows a compositional bias: low complexity; that stretch reads SGSSLHTHGSTGT. Phosphoserine is present on residues serine 31, serine 35, and serine 38. The BTB domain occupies 56-126; sequence APVHIDVGGH…LRTSKLLLPD (71 aa).

As to quaternary structure, forms oligomers, predominantly homopentamers. Interacts with KCTD1, probably forming heteropentamers depending on its abundance in a cell-type dependent manner. Interacts with TFAP2A; this interaction inhibits TFAP2A transcriptional activation.

Its subcellular location is the nucleus. During embryonic development, it is involved in neural crest formation. Inhibits AP2 transcriptional activity by interaction with its activation domain. This is BTB/POZ domain-containing protein KCTD15 (KCTD15) from Homo sapiens (Human).